We begin with the raw amino-acid sequence, 488 residues long: Zinc finger protein 92 (488 aa).

A KRAB domain is found at 14–85 (VSFEDVSVYF…DDGMESAARS (72 aa)). 6 C2H2-type zinc fingers span residues 141–163 (YLCQ…RIIH), 169–191 (YECS…QRIH), 197–219 (YECG…QVIH), 225–247 (FVCR…TRIH), 253–275 (FECT…QRIH), and 281–303 (YICK…QLIH). A C2H2-type 7; degenerate zinc finger spans residues 309–331 (FTCHEYGKAFRGLSGLSQHQRVH). Residues 337 to 359 (YECSECGRAFGRRANLFKHQVVH) form a C2H2-type 8 zinc finger. Residues 387 to 408 (QQPQEAGEGSSAEPQPIDTNEK) are disordered. The C2H2-type 9 zinc-finger motif lies at 410-432 (QVCERCGQVFENKLLLCRHLRIH). The disordered stretch occupies residues 435–488 (EDDKKQKPVISSTSVLEDKSLLSQHLEAQPTEESDSEGSVVFVYAEKPHGPSSP).

It belongs to the krueppel C2H2-type zinc-finger protein family. As to expression, highly expressed in pancreatic islets.

It localises to the nucleus. Its function is as follows. KRAB domain-containing zinc-finger protein that represses B1/Alu SINE transposable elements and modulates the transcription of nearby genes in a tissue-specific manner. It regulates glucose homeostasis and lipid metabolism by modulating the expression of the endocrine cell-defining transcription factor, MAFB, in pancreatic islets and, the fat metabolism regulator, ACACB, in adipose tissue and muscle. This is Zinc finger protein 92 (Zfp92) from Mus musculus (Mouse).